Here is a 445-residue protein sequence, read N- to C-terminus: Phosphoglucosamine mutase (445 aa).

S99 functions as the Phosphoserine intermediate in the catalytic mechanism. Mg(2+) is bound by residues S99, D242, D244, and D246. S99 carries the phosphoserine modification.

The protein belongs to the phosphohexose mutase family. The cofactor is Mg(2+). Activated by phosphorylation.

The enzyme catalyses alpha-D-glucosamine 1-phosphate = D-glucosamine 6-phosphate. In terms of biological role, catalyzes the conversion of glucosamine-6-phosphate to glucosamine-1-phosphate. The protein is Phosphoglucosamine mutase of Helicobacter pylori (strain Shi470).